The primary structure comprises 844 residues: 3',5'-cyclic-AMP phosphodiesterase 4A (844 aa).

The tract at residues 1–124 (MEPPAAPSER…RSPLDSQASP (124 aa)) is disordered. Residue Ser13 is modified to Phosphoserine. Residues 36 to 46 (QPRTPIRIQQR) are compositionally biased toward low complexity. The span at 51–78 (SAERSEPERSPHRPIERADAVDTGDRPG) shows a compositional bias: basic and acidic residues. A compositionally biased stretch (polar residues) spans 82–91 (TRMSWPSSFH). 5 positions are modified to phosphoserine: Ser147, Ser152, Ser160, Ser204, and Ser333. Residues 343-672 (VKTDQEDLLA…DWYHSAIRQS (330 aa)) enclose the PDEase domain. Residue Lys344 forms a Glycyl lysine isopeptide (Lys-Gly) (interchain with G-Cter in SUMO) linkage. The Proton donor role is filled by His419. His419 lines the 3',5'-cyclic AMP pocket. AMP contacts are provided by His419 and His423. The Zn(2+) site is built by His423, His459, Asp460, and Asp577. AMP contacts are provided by Asp460, Asp577, Gln628, and Phe631. Asp460 is a binding site for Mg(2+). Asp460 contributes to the Mn(2+) binding site. Positions 628 and 631 each coordinate 3',5'-cyclic AMP. Residues Ser672 and Ser674 each carry the phosphoserine modification. The interval 819–844 (ACSGTSGDNSAVISAPGRWGSGGDPA) is disordered. Over residues 820–830 (CSGTSGDNSAV) the composition is skewed to polar residues.

This sequence belongs to the cyclic nucleotide phosphodiesterase family. PDE4 subfamily. In terms of assembly, interacts with LYN (via SH3 domain). Interacts with ARRB2. Zn(2+) is required as a cofactor. Mg(2+) serves as cofactor. The cofactor is Mn(2+). In terms of processing, proteolytically cleaved by CASP3.

The protein resides in the cytoplasm. It localises to the cytosol. It is found in the membrane. The catalysed reaction is 3',5'-cyclic AMP + H2O = AMP + H(+). It participates in purine metabolism; 3',5'-cyclic AMP degradation; AMP from 3',5'-cyclic AMP: step 1/1. Its activity is regulated as follows. Inhibited by rolipram and diazepam. Its function is as follows. Hydrolyzes the second messenger 3',5'-cyclic AMP (cAMP), which is a key regulator of many important physiological processes. Functionally, efficiently hydrolyzes cAMP. The polypeptide is 3',5'-cyclic-AMP phosphodiesterase 4A (Pde4a) (Mus musculus (Mouse)).